Here is a 451-residue protein sequence, read N- to C-terminus: Eukaryotic translation initiation factor 3 subunit E (451 aa).

The 181-residue stretch at 245–425 folds into the PCI domain; sequence PFFNHEPARD…GTVVMNHPPS (181 aa).

The protein belongs to the eIF-3 subunit E family. As to quaternary structure, component of the eukaryotic translation initiation factor 3 (eIF-3) complex.

Its subcellular location is the cytoplasm. Its function is as follows. Component of the eukaryotic translation initiation factor 3 (eIF-3) complex, which is involved in protein synthesis of a specialized repertoire of mRNAs and, together with other initiation factors, stimulates binding of mRNA and methionyl-tRNAi to the 40S ribosome. The eIF-3 complex specifically targets and initiates translation of a subset of mRNAs involved in cell proliferation. This is Eukaryotic translation initiation factor 3 subunit E (int6) from Sclerotinia sclerotiorum (strain ATCC 18683 / 1980 / Ss-1) (White mold).